Reading from the N-terminus, the 150-residue chain is MATILVLHGPNLNLLGTREPGVYGTITLPQINQDLEQRARDAGHHLMYLQSNAEYELIDRIHAARGEGVDFILINPAAFTHTSVAIRDALMGVSIPFIEVHLSNVHKREPFRHHSYFSDVAVGVICGLGASGYRLALEAALEQLAASAKP.

Tyr23 serves as the catalytic Proton acceptor. Residues Asn75, His81, and Asp88 each contribute to the substrate site. His101 acts as the Proton donor in catalysis. Residues 102 to 103 (LS) and Arg112 each bind substrate.

Belongs to the type-II 3-dehydroquinase family. In terms of assembly, homododecamer.

It catalyses the reaction 3-dehydroquinate = 3-dehydroshikimate + H2O. The protein operates within metabolic intermediate biosynthesis; chorismate biosynthesis; chorismate from D-erythrose 4-phosphate and phosphoenolpyruvate: step 3/7. Its function is as follows. Catalyzes a trans-dehydration via an enolate intermediate. The polypeptide is 3-dehydroquinate dehydratase (Pseudomonas savastanoi pv. phaseolicola (strain 1448A / Race 6) (Pseudomonas syringae pv. phaseolicola (strain 1448A / Race 6))).